A 61-amino-acid polypeptide reads, in one-letter code: Disintegrin rubistatin (61 aa).

Positions 1-61 (NPCCDAATCK…ADCPRNGLYG (61 aa)) constitute a Disintegrin domain. 4 cysteine pairs are disulfide-bonded: cysteine 3–cysteine 26, cysteine 17–cysteine 23, cysteine 22–cysteine 47, and cysteine 35–cysteine 54. The short motif at 39–41 (MVD) is the Cell attachment site; atypical (MVD) element.

The protein belongs to the venom metalloproteinase (M12B) family. P-II subfamily. P-IIa sub-subfamily. In terms of assembly, monomer. As to expression, expressed by the venom gland.

It localises to the secreted. In terms of biological role, recombinant disintegrin rubistatin inhibits ADP-induced platelet aggregation. In addition, it strongly induces apoptosis, and inhibits cell migration and proliferation of the human cancer cell line SK-Mel-28. This chain is Disintegrin rubistatin, found in Crotalus ruber ruber (Red diamond rattlesnake).